A 425-amino-acid chain; its full sequence is Inositol hexakisphosphate kinase 2 (425 aa).

ATP is bound by residues glutamate 206–leucine 208 and aspartate 219. Substrate is bound by residues proline 215–glycine 223, lysine 221, and lysine 235–lysine 242. Residue aspartate 382 coordinates ATP. Residue histidine 385 participates in substrate binding.

The protein belongs to the inositol phosphokinase (IPK) family. As to expression, highly expressed in small intestine.

The protein localises to the nucleus. The enzyme catalyses 1D-myo-inositol hexakisphosphate + ATP = 5-diphospho-1D-myo-inositol 1,2,3,4,6-pentakisphosphate + ADP. It functions in the pathway phospholipid metabolism; phosphatidylinositol metabolism. Its function is as follows. Converts inositol hexakisphosphate (InsP6) to diphosphoinositol pentakisphosphate (InsP7/PP-InsP5). This is Inositol hexakisphosphate kinase 2 (Ip6k2) from Rattus norvegicus (Rat).